The following is a 121-amino-acid chain: MSVSFLIFLPVLGLPWGVLSQVQLQQSGPGLVKPSQTLSLTCAISGDSVSSNSAAWNWIRQSPSRGLEWLGRTYYRSKWYNDYAVSVKSRITINPDTSKNQFSLQLNSVTPEDTAVYYCAR.

An N-terminal signal peptide occupies residues 1–20; sequence MSVSFLIFLPVLGLPWGVLS. A framework-1 region spans residues 21-45; that stretch reads QVQLQQSGPGLVKPSQTLSLTCAIS. One can recognise an Ig-like domain in the interval 21–121; sequence QVQLQQSGPG…EDTAVYYCAR (101 aa). Cysteine 42 and cysteine 119 are oxidised to a cystine. A complementarity-determining-1 region spans residues 46 to 55; sequence GDSVSSNSAA. A framework-2 region spans residues 56–72; the sequence is WNWIRQSPSRGLEWLGR. Residues 73-81 are complementarity-determining-2; that stretch reads TYYRSKWYN. Residues 82 to 119 are framework-3; that stretch reads DYAVSVKSRITINPDTSKNQFSLQLNSVTPEDTAVYYC. The tract at residues 120–121 is complementarity-determining-3; it reads AR.

Immunoglobulins are composed of two identical heavy chains and two identical light chains; disulfide-linked.

It is found in the secreted. The protein localises to the cell membrane. Its function is as follows. V region of the variable domain of immunoglobulin heavy chains that participates in the antigen recognition. Immunoglobulins, also known as antibodies, are membrane-bound or secreted glycoproteins produced by B lymphocytes. In the recognition phase of humoral immunity, the membrane-bound immunoglobulins serve as receptors which, upon binding of a specific antigen, trigger the clonal expansion and differentiation of B lymphocytes into immunoglobulins-secreting plasma cells. Secreted immunoglobulins mediate the effector phase of humoral immunity, which results in the elimination of bound antigens. The antigen binding site is formed by the variable domain of one heavy chain, together with that of its associated light chain. Thus, each immunoglobulin has two antigen binding sites with remarkable affinity for a particular antigen. The variable domains are assembled by a process called V-(D)-J rearrangement and can then be subjected to somatic hypermutations which, after exposure to antigen and selection, allow affinity maturation for a particular antigen. The protein is Immunoglobulin heavy variable 6-1 of Homo sapiens (Human).